The chain runs to 429 residues: Endoglucanase type C (429 aa).

The first 18 residues, M1 to A18, serve as a signal peptide directing secretion. Residue Q19 is modified to Pyrrolidone carboxylic acid. 9 cysteine pairs are disulfide-bonded: C36–C42, C66–C88, C78–C84, C156–C383, C190–C213, C194–C212, C233–C252, C241–C246, and C257–C333. N-linked (GlcNAc...) asparagine glycosylation is present at N74. E215 serves as the catalytic Nucleophile. Catalysis depends on E220, which acts as the Proton donor. 2 N-linked (GlcNAc...) asparagine glycosylation sites follow: N265 and N318.

Belongs to the glycosyl hydrolase 7 (cellulase C) family.

The enzyme catalyses Endohydrolysis of (1-&gt;4)-beta-D-glucosidic linkages in cellulose, lichenin and cereal beta-D-glucans.. The chain is Endoglucanase type C from Fusarium oxysporum (Fusarium vascular wilt).